The following is a 418-amino-acid chain: Tyrosine--tRNA ligase (418 aa).

Residue Y34 coordinates L-tyrosine. The short motif at P39 to H48 is the 'HIGH' region element. 2 residues coordinate L-tyrosine: Y169 and Q173. The 'KMSKS' region motif lies at K229–S233. Residue K232 participates in ATP binding. Positions L352 to Y418 constitute an S4 RNA-binding domain.

Belongs to the class-I aminoacyl-tRNA synthetase family. TyrS type 1 subfamily. Homodimer.

It is found in the cytoplasm. It catalyses the reaction tRNA(Tyr) + L-tyrosine + ATP = L-tyrosyl-tRNA(Tyr) + AMP + diphosphate + H(+). Functionally, catalyzes the attachment of tyrosine to tRNA(Tyr) in a two-step reaction: tyrosine is first activated by ATP to form Tyr-AMP and then transferred to the acceptor end of tRNA(Tyr). The polypeptide is Tyrosine--tRNA ligase (Streptococcus uberis (strain ATCC BAA-854 / 0140J)).